We begin with the raw amino-acid sequence, 271 residues long: Extracellular metalloprotease TRV_06892 (271 aa).

Positions 1–19 are cleaved as a signal peptide; it reads MRFSVLLTGLAAAGSIATA. The N-linked (GlcNAc...) asparagine glycan is linked to asparagine 136. Zn(2+) is bound at residue histidine 185. Glutamate 186 is a catalytic residue. Histidine 189 is a Zn(2+) binding site. N-linked (GlcNAc...) asparagine glycosylation occurs at asparagine 200. Cysteine 222 and cysteine 248 are oxidised to a cystine.

It belongs to the peptidase M43B family.

The protein localises to the secreted. Secreted metalloproteinase that allows assimilation of proteinaceous substrates. Plays a pivotal role as a pathogenicity determinant during infections and contributes to the ability of the pathogen to persist within the mammalian host. The chain is Extracellular metalloprotease TRV_06892 from Trichophyton verrucosum (strain HKI 0517).